Here is a 394-residue protein sequence, read N- to C-terminus: D-mannose isomerase (394 aa).

Active-site proton donor/acceptor residues include His-251 and His-380.

Belongs to the N-acylglucosamine 2-epimerase family. In terms of assembly, monomer.

The enzyme catalyses D-mannose = D-fructose. It carries out the reaction D-lyxose = D-xylulose. In terms of biological role, catalyzes the reversible isomerization of D-mannose to D-fructose. Can also isomerize D-lyxose, with lower efficiency. In longer reaction with a higher concentration of enzyme, it can isomerize 4-OH D-mannose derivatives (D-talose and 4-O-monosaccharyl-D-mannose). Cannot use D-glucose. The protein is D-mannose isomerase of Marinomonas mediterranea (strain ATCC 700492 / JCM 21426 / NBRC 103028 / MMB-1).